We begin with the raw amino-acid sequence, 757 residues long: Endoribonuclease ysh1 (757 aa).

Zn(2+) contacts are provided by His-78, His-80, Asp-82, His-83, His-165, and Asp-186. His-403 acts as the Proton donor in catalysis. Zn(2+) is bound at residue His-425. The interval 698–757 is disordered; sequence SQNDVSEDDFENEESDDDKIFEQQTKIEDDVKNENKTEPVEEQKSEEKNEQPNLKKEELS. A compositionally biased stretch (acidic residues) spans 702–714; the sequence is VSEDDFENEESDD. Basic and acidic residues predominate over residues 715–757; it reads DKIFEQQTKIEDDVKNENKTEPVEEQKSEEKNEQPNLKKEELS.

Belongs to the metallo-beta-lactamase superfamily. RNA-metabolizing metallo-beta-lactamase-like family. CPSF2/YSH1 subfamily.

It localises to the cytoplasm. Its subcellular location is the nucleus. Component of the cleavage factor I (CF I) involved in pre-mRNA 3'-end processing. The polypeptide is Endoribonuclease ysh1 (ysh1) (Schizosaccharomyces pombe (strain 972 / ATCC 24843) (Fission yeast)).